The primary structure comprises 212 residues: Putative inactive 6-phospho-alpha-glucosidase (212 aa).

Residue 4 to 70 (FSVVVAGGGS…PDIAFSYTTD (67 aa)) coordinates NAD(+). Mn(2+) contacts are provided by cysteine 169 and histidine 200.

This sequence belongs to the glycosyl hydrolase 4 family.

This Escherichia coli (strain K12) protein is Putative inactive 6-phospho-alpha-glucosidase.